We begin with the raw amino-acid sequence, 262 residues long: MVLIRVLANLLILQLSYAQKSSEPIIGGDECNRNEHRFLALVSSDGNQCGGTLINEEWVLTAAHCEGNKMKIHLGVHSKKVPNKDKQTRVAKEKFFCVSSKNYTFWDKDIMLIRLDRPVSNSEHIAPLSLPSSPPSVGSVCRIMGWGTISPTKVILPDVPHCVNINLLNYSVCRAAYPEYGLPATSRTLCAGILEGGKDTCVGDSGGPLICNGQFQGIASWGSPNCGYVREPALYTKVFDHLDWIQSIIAGNTDATCPFVNF.

Positions 1–18 are cleaved as a signal peptide; the sequence is MVLIRVLANLLILQLSYA. The propeptide occupies 19–24; that stretch reads QKSSEP. Residues 25-250 form the Peptidase S1 domain; the sequence is IIGGDECNRN…HLDWIQSIIA (226 aa). Intrachain disulfides connect Cys31-Cys162, Cys49-Cys65, Cys97-Cys257, Cys141-Cys211, Cys173-Cys190, and Cys201-Cys226. Catalysis depends on His64, which acts as the Charge relay system. Residue Asn102 is glycosylated (N-linked (GlcNAc...) asparagine). The active-site Charge relay system is Asp109. Residue Asn169 is glycosylated (N-linked (GlcNAc...) asparagine). Ser205 acts as the Charge relay system in catalysis.

Belongs to the peptidase S1 family. Snake venom subfamily. As to quaternary structure, monomer. In terms of tissue distribution, expressed by the venom gland.

The protein localises to the secreted. Snake venom serine protease that may act in the hemostasis system of the prey. In Crotalus atrox (Western diamondback rattlesnake), this protein is Snake venom serine protease catroxase-1.